Reading from the N-terminus, the 503-residue chain is Maturase K (503 aa).

This sequence belongs to the intron maturase 2 family. MatK subfamily.

It localises to the plastid. The protein localises to the chloroplast. Usually encoded in the trnK tRNA gene intron. Probably assists in splicing its own and other chloroplast group II introns. The polypeptide is Maturase K (Rosa carolina (Pasture rose)).